A 105-amino-acid polypeptide reads, in one-letter code: Large ribosomal subunit protein bL21 (105 aa).

It belongs to the bacterial ribosomal protein bL21 family. In terms of assembly, part of the 50S ribosomal subunit. Contacts protein L20.

This protein binds to 23S rRNA in the presence of protein L20. The polypeptide is Large ribosomal subunit protein bL21 (Treponema pallidum (strain Nichols)).